A 1516-amino-acid polypeptide reads, in one-letter code: Alpha-2-macroglobulin homolog (1516 aa).

A signal peptide spans methionine 1–alanine 26.

The protein belongs to the protease inhibitor I39 (alpha-2-macroglobulin) family. Bacterial alpha-2-macroglobulin subfamily.

This is Alpha-2-macroglobulin homolog from Pseudomonas aeruginosa (strain ATCC 15692 / DSM 22644 / CIP 104116 / JCM 14847 / LMG 12228 / 1C / PRS 101 / PAO1).